The chain runs to 408 residues: 3-phosphoshikimate 1-carboxyvinyltransferase (408 aa).

3 residues coordinate 3-phosphoshikimate: lysine 10, serine 11, and arginine 15. Lysine 10 provides a ligand contact to phosphoenolpyruvate. The phosphoenolpyruvate site is built by glycine 79 and arginine 107. 3-phosphoshikimate contacts are provided by serine 150, serine 151, glutamine 152, serine 179, glutamate 297, and histidine 324. Glutamine 152 is a binding site for phosphoenolpyruvate. Glutamate 297 functions as the Proton acceptor in the catalytic mechanism. 3 residues coordinate phosphoenolpyruvate: arginine 328, arginine 369, and lysine 394.

This sequence belongs to the EPSP synthase family. In terms of assembly, monomer.

The protein resides in the cytoplasm. The catalysed reaction is 3-phosphoshikimate + phosphoenolpyruvate = 5-O-(1-carboxyvinyl)-3-phosphoshikimate + phosphate. Its pathway is metabolic intermediate biosynthesis; chorismate biosynthesis; chorismate from D-erythrose 4-phosphate and phosphoenolpyruvate: step 6/7. Functionally, catalyzes the transfer of the enolpyruvyl moiety of phosphoenolpyruvate (PEP) to the 5-hydroxyl of shikimate-3-phosphate (S3P) to produce enolpyruvyl shikimate-3-phosphate and inorganic phosphate. The sequence is that of 3-phosphoshikimate 1-carboxyvinyltransferase from Corynebacterium efficiens (strain DSM 44549 / YS-314 / AJ 12310 / JCM 11189 / NBRC 100395).